A 180-amino-acid polypeptide reads, in one-letter code: Trafficking protein particle complex subunit 3 (180 aa).

C68 carries S-palmitoyl cysteine lipidation.

The protein belongs to the TRAPP small subunits family. BET3 subfamily. Homodimer. Component of the multisubunit transport protein particle (TRAPP) complex, which includes at least TRAPPC2, TRAPPC2L, TRAPPC3, TRAPPC3L, TRAPPC4, TRAPPC5, TRAPPC8, TRAPPC9, TRAPPC10, TRAPPC11 and TRAPPC12. Heterodimer with TRAPPC6A. The heterodimer TRAPPC3-TRAPPC6A interacts with TRAPPC2L. Heterodimer with TRAPPC6b. The heterodimer TRAPPC6B-TRAPPC3 interacts with TRAPPC1 likely providing a core for TRAPP complex formation. In terms of tissue distribution, widely expressed. Expressed in lung, heart, liver, spleen, brain and kidney.

The protein resides in the golgi apparatus. It localises to the cis-Golgi network. The protein localises to the endoplasmic reticulum. Functionally, may play a role in vesicular transport from endoplasmic reticulum to Golgi. This is Trafficking protein particle complex subunit 3 from Mus musculus (Mouse).